The following is a 140-amino-acid chain: Endoribonuclease YbeY (140 aa).

Residues His101, His105, and His111 each coordinate Zn(2+).

This sequence belongs to the endoribonuclease YbeY family. Zn(2+) serves as cofactor.

The protein resides in the cytoplasm. Functionally, single strand-specific metallo-endoribonuclease involved in late-stage 70S ribosome quality control and in maturation of the 3' terminus of the 16S rRNA. This chain is Endoribonuclease YbeY, found in Aliarcobacter butzleri (strain RM4018) (Arcobacter butzleri).